A 124-amino-acid chain; its full sequence is Type-4 ice-structuring protein (124 aa).

The first 20 residues, 1–20 (MKFSLIAAVALLALAQGSFA), serve as a signal peptide directing secretion. Gln21 is modified (pyrrolidone carboxylic acid).

The protein belongs to the apolipoprotein A1/A4/E family.

It localises to the secreted. Its function is as follows. Antifreeze proteins lower the blood freezing point. In Paralichthys olivaceus (Bastard halibut), this protein is Type-4 ice-structuring protein.